Reading from the N-terminus, the 138-residue chain is Isochorismatase-like protein asqB (138 aa).

This sequence belongs to the isochorismatase family.

It catalyses the reaction [(1'E)-5'-(3',3'-dimethyloxiran-2'-yl)-3'-hydroxy-3'-methylpent-1'-en-1'-yl]-quinolinone B = yaequinolone C. It participates in secondary metabolite biosynthesis. The protein operates within alkaloid biosynthesis. It functions in the pathway mycotoxin biosynthesis. Functionally, isochorismatase-like protein; part of the gene cluster that mediates the biosynthesis of the aspoquinolone mycotoxins. Within the pathway, asqB converts [(1'E)-5'-(3',3'-dimethyloxiran-2'-yl)-3'-hydroxy-3'-methylpent-1'-en-1'-yl]-quinolinone B into yaequinolone C. The first step of the pathway is catalyzed by the nonribosomal peptide synthetase asqK that condenses anthranilic acid and O-methyl-L-tyrosine to produce 4'-methoxycyclopeptin. 4'-methoxycyclopeptin is then converted to 4'-methoxydehydrocyclopeptin by the ketoglutarate-dependent dioxygenase asqJ. AsqJ also converts its first product 4'-methoxydehydrocyclopeptin to 4'-methoxycyclopenin. The following conversion of 4'-methoxycyclopenin into 4'-methoxyviridicatin is catalyzed by the cyclopenase asqI. 4'-methoxyviridicatin is the precursor of quinolone natural products, and is further converted to quinolinone B. The prenyltransferase asqH1 then catalyzes the canonical Friedel-Crafts alkylation of quinolinone B with dimethylallyl cation to yield dimethylallyl quinolone, which is subjected to FAD-dependent dehydrogenation by the FAD-linked oxidoreductase asqF to yield conjugated aryl diene. The delta(3') double bond then serves as the site of the second alkylation with DMAPP catalyzed by the prenyltransferase asqH2 to yield a carbenium ion intermediate, which can be attacked by H(2)O to yield a styrenyl quinolone containing a C3'-hydroxyprenyl chain. The FAD-dependent monooxygenase asqG performs epoxidation of the terminal C7'-C8' olefin. Finally, after dehydratation of the epoxide at C3 by asqC, the quinolone epoxide rearrangement protein asqO catalyzes an enzymatic 3-exo-tet cyclization to yield the cyclopropyl-THF ring system in aspoquinolone. This Emericella nidulans (strain FGSC A4 / ATCC 38163 / CBS 112.46 / NRRL 194 / M139) (Aspergillus nidulans) protein is Isochorismatase-like protein asqB.